A 770-amino-acid polypeptide reads, in one-letter code: ATP-dependent RNA helicase HCA4 (770 aa).

The Q motif motif lies at 41–69 (KFFKDLPISDPTLKGLRESSFIKLTEIQA). Residues 72–246 (IPVSLQGHDV…RLSLTDYKTV (175 aa)) form the Helicase ATP-binding domain. 85 to 92 (AKTGSGKT) contributes to the ATP binding site. The DEAD box motif lies at 194-197 (DEAD). In terms of domain architecture, Helicase C-terminal spans 278–437 (KLDILFSFIK…SIKPQLQSLL (160 aa)). Phosphoserine is present on residues Ser692, Ser710, Ser714, and Ser743. The segment at 705–724 (GTGNLSDDMSDGDMPDSEGH) is disordered.

This sequence belongs to the DEAD box helicase family. DDX10/DBP4 subfamily. Interacts with the U3 and U14 snoRNAs. Associates with pre-ribosomal complexes.

The protein resides in the nucleus. Its subcellular location is the nucleolus. The catalysed reaction is ATP + H2O = ADP + phosphate + H(+). In terms of biological role, ATP-dependent RNA helicase required for ribosome biogenesis. Involved in the release of U14 snoRNA in pre-ribosomal complexes. Required for pre-rRNA cleavage at site A2. The polypeptide is ATP-dependent RNA helicase HCA4 (HCA4) (Saccharomyces cerevisiae (strain ATCC 204508 / S288c) (Baker's yeast)).